The following is a 226-amino-acid chain: Protein FMP52-1, mitochondrial (226 aa).

The N-terminal 43 residues, 1–43, are a transit peptide targeting the mitochondrion; sequence MSAFVLGSTGLVGLQILKVLDSSTAFKKVSTVSRRLPSVTSGK.

This sequence belongs to the FMP52 family.

Its subcellular location is the mitochondrion outer membrane. This Scheffersomyces stipitis (strain ATCC 58785 / CBS 6054 / NBRC 10063 / NRRL Y-11545) (Yeast) protein is Protein FMP52-1, mitochondrial (FMP521).